The primary structure comprises 48 residues: uncharacterized protein (48 aa).

A helical membrane pass occupies residues 6–26; the sequence is IILLMIVCLVVSVLVVVWIIL.

The protein resides in the host membrane. This is an uncharacterized protein from Spiroplasma melliferum (SpV4).